The sequence spans 377 residues: Histidinol-phosphate aminotransferase (377 aa).

The residue at position 232 (lysine 232) is an N6-(pyridoxal phosphate)lysine.

This sequence belongs to the class-II pyridoxal-phosphate-dependent aminotransferase family. Histidinol-phosphate aminotransferase subfamily. As to quaternary structure, homodimer. Pyridoxal 5'-phosphate serves as cofactor.

The catalysed reaction is L-histidinol phosphate + 2-oxoglutarate = 3-(imidazol-4-yl)-2-oxopropyl phosphate + L-glutamate. The protein operates within amino-acid biosynthesis; L-histidine biosynthesis; L-histidine from 5-phospho-alpha-D-ribose 1-diphosphate: step 7/9. In Mycobacterium sp. (strain KMS), this protein is Histidinol-phosphate aminotransferase.